A 310-amino-acid chain; its full sequence is Alpha/beta hydrolase domain-containing protein 17A (310 aa).

Catalysis depends on charge relay system residues Ser190, Asp255, and His284. Position 307 is a phosphoserine (Ser307).

The protein belongs to the AB hydrolase superfamily. ABHD17 family. Post-translationally, palmitoylated on cysteine residues located in a cysteine cluster at the N-terminus which promotes membrane localization. Palmitoylation is required for post-synaptic localization and for depalmitoylating activity towards DLG4/PSD95.

Its subcellular location is the cell membrane. The protein localises to the endosome membrane. It localises to the cell projection. It is found in the dendritic spine. The protein resides in the postsynaptic density membrane. It catalyses the reaction S-hexadecanoyl-L-cysteinyl-[protein] + H2O = L-cysteinyl-[protein] + hexadecanoate + H(+). Hydrolyzes fatty acids from S-acylated cysteine residues in proteins. Has depalmitoylating activity towards NRAS. Has depalmitoylating activity towards DLG4/PSD95. May have depalmitoylating activity towards MAP6. This chain is Alpha/beta hydrolase domain-containing protein 17A, found in Bos taurus (Bovine).